The primary structure comprises 282 residues: NAD(P)H-hydrate epimerase (282 aa).

Residues 1–53 (MSGLRTLLGLGLLVAGSRLPRVISQQSVCRARPIWWGTQRRGSETMAGAAVKY) constitute a mitochondrion transit peptide. Ser43 bears the Phosphoserine; by PKA mark. Residues 59–269 (AQAVDQELFN…ALEKKYQLNL (211 aa)) form the YjeF N-terminal domain. 113–117 (NNGGD) is a binding site for (6S)-NADPHX. Asn114 is a K(+) binding site. Lys138 carries the N6-succinyllysine modification. Asp179 provides a ligand contact to K(+). (6S)-NADPHX contacts are provided by residues 183-189 (GFSFKGD) and Asp212. Ser215 serves as a coordination point for K(+).

This sequence belongs to the NnrE/AIBP family. Homodimer. Interacts with APOA1 and APOA2. The cofactor is K(+). Post-translationally, undergoes physiological phosphorylation during sperm capacitation, downstream to PKA activation. As to expression, detected in testis and sperm (at protein level). Expressed at high levels in heart, liver, kidney, and testis.

Its subcellular location is the mitochondrion. It localises to the secreted. The catalysed reaction is (6R)-NADHX = (6S)-NADHX. The enzyme catalyses (6R)-NADPHX = (6S)-NADPHX. In terms of biological role, catalyzes the epimerization of the S- and R-forms of NAD(P)HX, a damaged form of NAD(P)H that is a result of enzymatic or heat-dependent hydration. This is a prerequisite for the S-specific NAD(P)H-hydrate dehydratase to allow the repair of both epimers of NAD(P)HX. Accelerates cholesterol efflux from endothelial cells to high-density lipoprotein (HDL) and thereby regulates angiogenesis. In Mus musculus (Mouse), this protein is NAD(P)H-hydrate epimerase.